The chain runs to 303 residues: Bifunctional protein FolD (303 aa).

NADP(+)-binding positions include 175–177 (GVS) and Ile243.

Belongs to the tetrahydrofolate dehydrogenase/cyclohydrolase family. In terms of assembly, homodimer.

The enzyme catalyses (6R)-5,10-methylene-5,6,7,8-tetrahydrofolate + NADP(+) = (6R)-5,10-methenyltetrahydrofolate + NADPH. It catalyses the reaction (6R)-5,10-methenyltetrahydrofolate + H2O = (6R)-10-formyltetrahydrofolate + H(+). It participates in one-carbon metabolism; tetrahydrofolate interconversion. Functionally, catalyzes the oxidation of 5,10-methylenetetrahydrofolate to 5,10-methenyltetrahydrofolate and then the hydrolysis of 5,10-methenyltetrahydrofolate to 10-formyltetrahydrofolate. This is Bifunctional protein FolD from Xanthomonas axonopodis pv. citri (strain 306).